We begin with the raw amino-acid sequence, 606 residues long: Chaperone protein DnaK (606 aa).

Thr-174 is modified (phosphothreonine; by autocatalysis). Residues 578-606 are disordered; that stretch reads YTQAGPQGGTNPGGQGGTDGNVNTDYKVY. The segment covering 583–596 has biased composition (gly residues); sequence PQGGTNPGGQGGTD.

The protein belongs to the heat shock protein 70 family.

Functionally, acts as a chaperone. The protein is Chaperone protein DnaK of Caldicellulosiruptor saccharolyticus (strain ATCC 43494 / DSM 8903 / Tp8T 6331).